The chain runs to 160 residues: 3-hydroxyacyl-[acyl-carrier-protein] dehydratase FabZ (160 aa).

Residue histidine 60 is part of the active site.

It belongs to the thioester dehydratase family. FabZ subfamily.

The protein localises to the cytoplasm. It catalyses the reaction a (3R)-hydroxyacyl-[ACP] = a (2E)-enoyl-[ACP] + H2O. Its function is as follows. Involved in unsaturated fatty acids biosynthesis. Catalyzes the dehydration of short chain beta-hydroxyacyl-ACPs and long chain saturated and unsaturated beta-hydroxyacyl-ACPs. The sequence is that of 3-hydroxyacyl-[acyl-carrier-protein] dehydratase FabZ from Rhodospirillum rubrum (strain ATCC 11170 / ATH 1.1.1 / DSM 467 / LMG 4362 / NCIMB 8255 / S1).